The chain runs to 1390 residues: DNA-directed RNA polymerase subunit beta'' (1390 aa).

Zn(2+) contacts are provided by Cys-220, Cys-291, Cys-298, and Cys-301.

The protein belongs to the RNA polymerase beta' chain family. RpoC2 subfamily. As to quaternary structure, in plastids the minimal PEP RNA polymerase catalytic core is composed of four subunits: alpha, beta, beta', and beta''. When a (nuclear-encoded) sigma factor is associated with the core the holoenzyme is formed, which can initiate transcription. The cofactor is Zn(2+).

It localises to the plastid. The protein localises to the chloroplast. It catalyses the reaction RNA(n) + a ribonucleoside 5'-triphosphate = RNA(n+1) + diphosphate. DNA-dependent RNA polymerase catalyzes the transcription of DNA into RNA using the four ribonucleoside triphosphates as substrates. This Populus alba (White poplar) protein is DNA-directed RNA polymerase subunit beta''.